Reading from the N-terminus, the 1385-residue chain is Formin-like protein 7 (1385 aa).

The region spanning 9-193 is the Phosphatase tensin-type domain; sequence FKKPPDGLLL…RYVSMRNVVP (185 aa). Cys126 serves as the catalytic Phosphocysteine intermediate. Residues 199-358 form the C2 tensin-type domain; the sequence is DRALTLDSVI…KASSTSQGNI (160 aa). Disordered stretches follow at residues 345-367, 427-510, 649-989, and 1362-1385; these read IPQRKASSTSQGNIDESPADGSE, APSR…LTVN, STAA…PLHW, and KRAQMEAEKEKVKAAAHKEDLLEP. Polar residues-rich tracts occupy residues 349 to 358, 448 to 470, and 483 to 510; these read KASSTSQGNI, TSASSMALPSSTVIPQAPSSPVQ, and PAQSASKSAENSGSQTPVNQEPSPLTVN. 2 stretches are compositionally biased toward pro residues: residues 654-665 and 689-701; these read PPLPPPLPPPLK and TQPPLPPPPPPIQ. The span at 702–718 shows a compositional bias: low complexity; the sequence is PTLISNSIYSSTSSVVS. Pro residues-rich tracts occupy residues 727-758, 766-795, and 802-815; these read PAPPPPPPPPPPPPFPVSSFSPPQPPPQPPSA, PVPPPPPPPPPPMIPGMKTPPTPPPPPPAA, and AVPPPPPPPPPPMV. The segment covering 855–867 has biased composition (low complexity); that stretch reads QTSSLVSSLPSSR. 2 stretches are compositionally biased toward pro residues: residues 895 to 906 and 921 to 932; these read SAPPAPPLPPPK and WPPPPPPGPPPK. Low complexity predominate over residues 933-942; that stretch reads NSSNSLPSKG. Residues 974-1372 form the FH2 domain; it reads RPNQSSKRTP…RAQMEAEKEK (399 aa).

This sequence belongs to the formin-like family. Class-II subfamily.

This is Formin-like protein 7 (FH7) from Oryza sativa subsp. japonica (Rice).